Here is a 378-residue protein sequence, read N- to C-terminus: Queuine tRNA-ribosyltransferase (378 aa).

Aspartate 93 (proton acceptor) is an active-site residue. Residues 93–97 (DSGGF), aspartate 147, glutamine 189, and glycine 216 each bind substrate. An RNA binding region spans residues 247-253 (GVGTFRE). The Nucleophile role is filled by aspartate 266. The interval 271–275 (TRVAR) is RNA binding; important for wobble base 34 recognition. 4 residues coordinate Zn(2+): cysteine 308, cysteine 310, cysteine 313, and histidine 339.

The protein belongs to the queuine tRNA-ribosyltransferase family. Homodimer. Within each dimer, one monomer is responsible for RNA recognition and catalysis, while the other monomer binds to the replacement base PreQ1. The cofactor is Zn(2+).

It catalyses the reaction 7-aminomethyl-7-carbaguanine + guanosine(34) in tRNA = 7-aminomethyl-7-carbaguanosine(34) in tRNA + guanine. It functions in the pathway tRNA modification; tRNA-queuosine biosynthesis. Catalyzes the base-exchange of a guanine (G) residue with the queuine precursor 7-aminomethyl-7-deazaguanine (PreQ1) at position 34 (anticodon wobble position) in tRNAs with GU(N) anticodons (tRNA-Asp, -Asn, -His and -Tyr). Catalysis occurs through a double-displacement mechanism. The nucleophile active site attacks the C1' of nucleotide 34 to detach the guanine base from the RNA, forming a covalent enzyme-RNA intermediate. The proton acceptor active site deprotonates the incoming PreQ1, allowing a nucleophilic attack on the C1' of the ribose to form the product. After dissociation, two additional enzymatic reactions on the tRNA convert PreQ1 to queuine (Q), resulting in the hypermodified nucleoside queuosine (7-(((4,5-cis-dihydroxy-2-cyclopenten-1-yl)amino)methyl)-7-deazaguanosine). This chain is Queuine tRNA-ribosyltransferase, found in Gloeobacter violaceus (strain ATCC 29082 / PCC 7421).